Reading from the N-terminus, the 1396-residue chain is ATP-dependent helicase/nuclease subunit A (1396 aa).

The tract at residues 1–25 is disordered; sequence MNREALCHDDPIGHDRLRPDSIPRD. The region spanning 26–532 is the UvrD-like helicase ATP-binding domain; sequence PKWTDEQWQA…IDLAKNFRSR (507 aa). 47-54 provides a ligand contact to ATP; it reads AAAGAGKT. Disordered stretches follow at residues 590–649 and 1171–1205; these read DADG…GQPT and HSPETPPSSETPPSLEIPPSLETPPSLETQTPSPD. The UvrD-like helicase C-terminal domain occupies 615–920; that stretch reads HKNIAKAGES…RIMSIHKSKG (306 aa). The segment covering 1181–1199 has biased composition (low complexity); sequence TPPSLEIPPSLETPPSLET.

Belongs to the helicase family. AddA subfamily. As to quaternary structure, heterodimer of AddA and AddB/RexB. It depends on Mg(2+) as a cofactor.

The enzyme catalyses Couples ATP hydrolysis with the unwinding of duplex DNA by translocating in the 3'-5' direction.. It catalyses the reaction ATP + H2O = ADP + phosphate + H(+). Its function is as follows. The heterodimer acts as both an ATP-dependent DNA helicase and an ATP-dependent, dual-direction single-stranded exonuclease. Recognizes the chi site generating a DNA molecule suitable for the initiation of homologous recombination. The AddA nuclease domain is required for chi fragment generation; this subunit has the helicase and 3' -&gt; 5' nuclease activities. The chain is ATP-dependent helicase/nuclease subunit A from Heliobacterium modesticaldum (strain ATCC 51547 / Ice1).